Consider the following 64-residue polypeptide: Large ribosomal subunit protein bL35 (64 aa).

It belongs to the bacterial ribosomal protein bL35 family.

This is Large ribosomal subunit protein bL35 from Ureaplasma parvum serovar 3 (strain ATCC 27815 / 27 / NCTC 11736).